Reading from the N-terminus, the 105-residue chain is Large ribosomal subunit protein uL24 (105 aa).

It belongs to the universal ribosomal protein uL24 family. In terms of assembly, part of the 50S ribosomal subunit.

One of two assembly initiator proteins, it binds directly to the 5'-end of the 23S rRNA, where it nucleates assembly of the 50S subunit. Functionally, one of the proteins that surrounds the polypeptide exit tunnel on the outside of the subunit. The chain is Large ribosomal subunit protein uL24 from Francisella philomiragia subsp. philomiragia (strain ATCC 25017 / CCUG 19701 / FSC 153 / O#319-036).